Consider the following 622-residue polypeptide: Low affinity potassium transport system protein Kup (622 aa).

The next 12 membrane-spanning stretches (helical) occupy residues I12–L32, V49–L69, V103–I123, P137–I157, V165–L185, V213–A233, W247–L267, P276–A296, I337–F357, L363–T383, F396–L416, and L419–T439.

Belongs to the HAK/KUP transporter (TC 2.A.72) family.

Its subcellular location is the cell inner membrane. The enzyme catalyses K(+)(in) + H(+)(in) = K(+)(out) + H(+)(out). Functionally, responsible for the low-affinity transport of potassium into the cell. Likely operates as a K(+):H(+) symporter. This Salmonella gallinarum (strain 287/91 / NCTC 13346) protein is Low affinity potassium transport system protein Kup.